The following is a 203-amino-acid chain: Guanylate kinase (203 aa).

The 179-residue stretch at 3–181 folds into the Guanylate kinase-like domain; sequence GTLYIVAAPS…AVAEMCAIFT (179 aa). 10 to 17 provides a ligand contact to ATP; the sequence is APSGAGKS.

It belongs to the guanylate kinase family.

The protein resides in the cytoplasm. The enzyme catalyses GMP + ATP = GDP + ADP. Functionally, essential for recycling GMP and indirectly, cGMP. In Xanthomonas euvesicatoria pv. vesicatoria (strain 85-10) (Xanthomonas campestris pv. vesicatoria), this protein is Guanylate kinase.